The following is a 61-amino-acid chain: Short neurotoxin 1 (61 aa).

Positions 1–16 (LECHNQQSSQPPTTKS) are enriched in polar residues. Residues 1–20 (LECHNQQSSQPPTTKSCPGD) form a disordered region. 4 disulfides stabilise this stretch: C3–C23, C17–C40, C42–C53, and C54–C59.

This sequence belongs to the three-finger toxin family. Short-chain subfamily. Type I alpha-neurotoxin sub-subfamily. As to expression, expressed by the venom gland.

The protein localises to the secreted. In terms of biological role, binds to muscle nicotinic acetylcholine receptor (nAChR) and inhibit acetylcholine from binding to the receptor, thereby impairing neuromuscular transmission. This is Short neurotoxin 1 from Hemachatus haemachatus (Rinkhals).